A 174-amino-acid polypeptide reads, in one-letter code: 16S rRNA aminocarboxypropyltransferase (174 aa).

S-adenosyl-L-methionine-binding residues include T26, L73, L97, and S116.

The protein belongs to the TDD superfamily. TSR3 family.

Its subcellular location is the cytoplasm. The catalysed reaction is an N(1)-methylpseudouridine in rRNA + S-adenosyl-L-methionine = N(1)-methyl-N(3)-[(3S)-3-amino-3-carboxypropyl]pseudouridine in rRNA + S-methyl-5'-thioadenosine + H(+). Aminocarboxypropyltransferase that catalyzes the aminocarboxypropyl transfer on pseudouridine corresponding to position 914 in M.jannaschii 16S rRNA. It constitutes the last step in biosynthesis of the hypermodified N1-methyl-N3-(3-amino-3-carboxypropyl) pseudouridine (m1acp3-Psi). The chain is 16S rRNA aminocarboxypropyltransferase from Methanosarcina acetivorans (strain ATCC 35395 / DSM 2834 / JCM 12185 / C2A).